A 459-amino-acid polypeptide reads, in one-letter code: Hypotaurine/taurine--pyruvate aminotransferase (459 aa).

Lysine 287 carries the N6-(pyridoxal phosphate)lysine modification.

The protein belongs to the class-III pyridoxal-phosphate-dependent aminotransferase family. The cofactor is pyridoxal 5'-phosphate.

The enzyme catalyses hypotaurine + pyruvate = 2-sulfinoacetaldehyde + L-alanine. It catalyses the reaction taurine + pyruvate = sulfoacetaldehyde + L-alanine. It functions in the pathway organosulfur degradation. Functionally, converts hypotaurine to alanine and sulfinoacetaldehyde, which desulfinates spontaneously to acetaldehyde and sulfite. Can also catalyze the degradation of taurine into alanine and sulfoacetaldehyde, which is stable. Has 2-fold higher aminotransferase activity with hypotaurine as the substrate. The polypeptide is Hypotaurine/taurine--pyruvate aminotransferase (Paracoccus denitrificans (strain Pd 1222)).